The primary structure comprises 436 residues: Citrate synthase (436 aa).

Active-site residues include H311 and D370.

Belongs to the citrate synthase family. Homohexamer.

The catalysed reaction is oxaloacetate + acetyl-CoA + H2O = citrate + CoA + H(+). It participates in carbohydrate metabolism; tricarboxylic acid cycle; isocitrate from oxaloacetate: step 1/2. Its activity is regulated as follows. Allosterically inhibited by NADH. In Rickettsia prowazekii (strain Madrid E), this protein is Citrate synthase (gltA).